Here is a 434-residue protein sequence, read N- to C-terminus: Rubisco accumulation factor 1.1, chloroplastic (434 aa).

Residues 1–51 constitute a chloroplast transit peptide; the sequence is MLSLTATTLSSSIFTQSKTHGFFNTRPVYRKPFTTITSALIPASNRQAPPK. The segment at 65–254 is N-terminal alpha-helix; it reads IPPKFRSLDT…KAKKAVLREL (190 aa). A C-terminal beta sheet region spans residues 273–419; sequence VPVVRLRFGE…GMVVLVVRPP (147 aa).

The protein belongs to the RAF family. As to quaternary structure, homodimer.

The protein resides in the plastid. It localises to the chloroplast. Required for assembly or stability of RuBisCO. Acts at a postchaperonin step to fold and/or assemble the large subunit (rbcL) into RuBisCO. RAF1 binds first to a rbcL dimer (rbcL(2)), leading to a rbcL(8)-RAF1(4) complex formation. In the next step, RBCS displaces RAF1, thus resulting in holoenzyme formation. This chain is Rubisco accumulation factor 1.1, chloroplastic, found in Arabidopsis thaliana (Mouse-ear cress).